We begin with the raw amino-acid sequence, 541 residues long: Protein wntless homolog (541 aa).

Over Met-1–Cys-15 the chain is Cytoplasmic. Residues Ile-16–Ala-36 traverse the membrane as a helical segment. Residues Pro-37 to Lys-232 lie on the Lumenal side of the membrane. The interval Met-101 to Pro-202 is interaction with Wnt proteins. A helical transmembrane segment spans residues Val-233–Trp-253. Topologically, residues Arg-254–Lys-268 are cytoplasmic. The chain crosses the membrane as a helical span at residues Val-269 to Ile-289. Topologically, residues Gly-290 to Arg-303 are lumenal. Residues Gln-304–Met-324 form a helical membrane-spanning segment. At Asp-325 to His-331 the chain is on the cytoplasmic side. Residues Ile-332–Phe-352 traverse the membrane as a helical segment. The Lumenal portion of the chain corresponds to Asp-353–Ala-380. A helical membrane pass occupies residues Phe-381–Phe-401. The Cytoplasmic segment spans residues Gln-402 to Arg-431. A helical transmembrane segment spans residues Phe-432 to Val-452. The Lumenal segment spans residues Ser-453–Ser-471. The helical transmembrane segment at Ala-472–Tyr-492 threads the bilayer. Residues Ala-493 to Glu-541 are Cytoplasmic-facing.

The protein belongs to the wntless family. In terms of assembly, interacts with WNT3A. Interacts with WNT1, WNT3 and WNT5A. Post-translationally, N-glycosylated. As to expression, expressed in the brain, skeletal muscle, heart muscle, lung, gut, liver, and kidney (at protein level). In the brain, expressed in the cortex, striatum, ventral tegmentum, nucleus accumbens and to a lesser extent in the Purkinjie cells in the cerebellum. Expressed in eye iridocorneal angle.

Its subcellular location is the golgi apparatus membrane. The protein resides in the cytoplasmic vesicle membrane. It is found in the cell membrane. The protein localises to the endoplasmic reticulum membrane. It localises to the early endosome membrane. Functionally, regulates Wnt proteins sorting and secretion in a feedback regulatory mechanism. This reciprocal interaction plays a key role in the regulation of expression, subcellular location, binding and organelle-specific association of Wnt proteins. Also plays an important role in establishment of the anterior-posterior body axis formation during development. The protein is Protein wntless homolog (Wls) of Rattus norvegicus (Rat).